The primary structure comprises 374 residues: DNA integrity scanning protein DisA (374 aa).

Residues aspartate 20–serine 158 enclose the DAC domain. ATP-binding positions include glycine 87, leucine 105, and threonine 118–threonine 122.

Belongs to the DisA family. In terms of assembly, homooctamer. Interacts with RadA. The cofactor is Mg(2+).

The enzyme catalyses 2 ATP = 3',3'-c-di-AMP + 2 diphosphate. Its activity is regulated as follows. Diadenylate cyclase activity is inhibited by the interaction with RadA. In terms of biological role, participates in a DNA-damage check-point that is active prior to asymmetric division when DNA is damaged. DisA forms globular foci that rapidly scan along the chromosomes during sporulation, searching for lesions. When a lesion is present, DisA pauses at the lesion site. This triggers a cellular response that culminates in a temporary block in sporulation initiation. Also has diadenylate cyclase activity, catalyzing the condensation of 2 ATP molecules into cyclic di-AMP (c-di-AMP). c-di-AMP acts as a signaling molecule that couples DNA integrity with progression of sporulation. The rise in c-di-AMP level generated by DisA while scanning the chromosome, operates as a positive signal that advances sporulation; upon encountering a lesion, the DisA focus arrests at the damaged site and halts c-di-AMP synthesis. The protein is DNA integrity scanning protein DisA of Streptomyces coelicolor (strain ATCC BAA-471 / A3(2) / M145).